A 443-amino-acid chain; its full sequence is D(2) dopamine receptor (443 aa).

The Extracellular segment spans residues Met1–Tyr37. Asn5, Asn17, and Asn23 each carry an N-linked (GlcNAc...) asparagine glycan. A helical membrane pass occupies residues Ala38–Ser60. Topologically, residues Arg61–Asn70 are cytoplasmic. The helical transmembrane segment at Tyr71–Tyr93 threads the bilayer. At Leu94 to Asp108 the chain is on the extracellular side. Cysteines 107 and 182 form a disulfide. Residues Ile109–Ile130 form a helical membrane-spanning segment. Topologically, residues Asp131–Arg151 are cytoplasmic. The chain crosses the membrane as a helical span at residues Val152–Phe172. At Gly173–Ala188 the chain is on the extracellular side. The chain crosses the membrane as a helical span at residues Phe189–Tyr213. An interaction with PPP1R9B region spans residues Lys211–Gln373. Over Ile214–Gln373 the chain is Cytoplasmic. A disordered region spans residues Met281–Lys332. The segment covering Ala323–Lys332 has biased composition (basic and acidic residues). A helical transmembrane segment spans residues Met374–Leu395. Topologically, residues Asn396–Ser409 are extracellular. Cys399 and Cys401 are joined by a disulfide. The chain crosses the membrane as a helical span at residues Ala410–Ile431. Topologically, residues Glu432–Cys443 are cytoplasmic. Cys443 carries the S-palmitoyl cysteine lipid modification.

This sequence belongs to the G-protein coupled receptor 1 family. As to quaternary structure, forms homo- and heterooligomers with DRD4. The interaction with DRD4 may modulate agonist-induced downstream signaling. Interacts with CADPS and CADPS2. Interacts with GPRASP1, PPP1R9B and CLIC6. Interacts with ARRB2. Interacts with HTR2A. Interacts with GNAI2 isoform sGi2, the interaction allows the creation of an intracellular pool of DRD2 that can be released to cell surface upon agonist stimulation. Interacts with DRD1. Interacts with KCNA2. Post-translationally, palmitoylated. Palmitoylation which is required for proper localization to the plasma membrane and stability of the receptor could be carried on by ZDHHC4, ZDHHC3 and ZDHHC8. Expressed in the anterior pituitary gland.

The protein resides in the cell membrane. It is found in the golgi apparatus membrane. Functionally, dopamine receptor whose activity is mediated by G proteins which inhibit adenylyl cyclase. Positively regulates postnatal regression of retinal hyaloid vessels via suppression of VEGFR2/KDR activity, downstream of OPN5. In Homo sapiens (Human), this protein is D(2) dopamine receptor (DRD2).